A 141-amino-acid chain; its full sequence is HTH-type transcriptional repressor NsrR (141 aa).

The region spanning 2 to 129 (QLTSFTDYGL…DNYTLADLVE (128 aa)) is the HTH rrf2-type domain. The segment at residues 28–51 (ISQVTEVYGVSRNHMVKIINQLSR) is a DNA-binding region (H-T-H motif). [2Fe-2S] cluster is bound by residues C91, C96, and C102.

[2Fe-2S] cluster serves as cofactor.

Its function is as follows. Nitric oxide-sensitive repressor of genes involved in protecting the cell against nitrosative stress. May require iron for activity. The chain is HTH-type transcriptional repressor NsrR from Enterobacter sp. (strain 638).